The following is a 61-amino-acid chain: Probable tautomerase SMU_1087 (61 aa).

The active-site Proton acceptor; via imino nitrogen is the Pro-2.

The protein belongs to the 4-oxalocrotonate tautomerase family.

In Streptococcus mutans serotype c (strain ATCC 700610 / UA159), this protein is Probable tautomerase SMU_1087.